A 1372-amino-acid chain; its full sequence is MNKVYSLKYCPVTGGLIAVSELARRVIKKTCRRLTHILLAGIPAICLCYSQISQAGIVRSDIAYQIYRDFAENKGLFVPGANDIPVYDKDGKLVGRLGKAPMADFSSVSSNGVATLVSPQYIVSVKHNGGYRSVSFGNGKNTYSLVDRNNHPSIDFHAPRLNKLVTEVIPSAVTSEGTKANAYKYTERYTAFYRVGSGTQYTKDKDGNLVKVAGGYAFKTGGTTGVPLISDATIVSNPGQTYNPVNGPLPDYGAPGDSGSPLFAYDKQQKKWVIVAVLRAYAGINGATNWWNVIPTDYLNQVMQDDFDAPVDFVSGLGPLNWTYDKTSGTGTLSQGSKNWTMHGQKDNDLNAGKNLVFSGQNGAIILKDSVTQGAGYLEFKDSYTVSAESGKTWTGAGIITDKGTNVTWKVNGVAGDNLHKLGEGTLTINGTGVNPGGLKTGDGIVVLNQQADTAGNIQAFSSVNLASGRPTVVLGDARQVNPDNISWGYRGGKLDLNGNAVTFTRLQAADYGAVITNNAQQKSQLLLDLKAQDTNVSEPTIGNISPFGGTGTPGNLYSMILNSQTRFYILKSASYGNTLWGNSLNDPAQWEFVGMDKNKAVQTVKDRILAGRAKQPVIFHGQLTGNMDVAIPQVPGGRKVIFDGSVNLPEGTLSQDSGTLIFQGHPVIHASISGSAPVSLNQKDWENRQFTMKTLSLKDADFHLSRNASLNSDIKSDNSHITLGSDRAFVDKNDGTGNYVIPEEGTSVPDTVNDRSQYEGNITLNHNSALDIGSRFTGGIDAYDSAVSITSPDVLLTAPGAFAGSSLTVHDGGHLTALNGLFSDGHIQAGKNGKITLSGTPVKDTANQYAPAVYLTDGYDLTGDNAALEITRGAHASGDIHASAASTVTIGSDTPAELASAETAASAFAGSLLEGYNAAFNGAITGGRADVSMHNALWTLGGDSAIHSLTVRNSRISSEGDRTFRTLTVNKLDATGSDFVLRTDLKNADKINVTEKATGSDNSLNVSFMNNPAQGQALNIPLVTAPAGTSAEMFKAGTRVTGFSRVTPTLHVDTSGGNTKWILDGFKAEADKAAAAKADSFMNAGYKNFMTEVNNLNKRMGDLRDTNGDAGAWARIMSGAGSADGGYSDNYTHVQVGFDKKHELDGVDLFTGVTMTYTDSSADSHAFSGKTKSVGGGLYASALFESGAYIDLIGKYIHHDNDYTGNFASLGTKHYNTHSWYAGAETGYRYHLTEDTFIEPQAELVYGAVSGKTFRWKDGDMDLSMKNRDFSPLVGRTGVELGKTFSGKDWSVTARAGTSWQFDLLNNGETVLRDASGEKRIKGEKDSRMLFNVGMNAQIKDNMRFGLEFEKSAFGKYNVDNAVNANFRYMF.

The N-terminal stretch at 1-55 (MNKVYSLKYCPVTGGLIAVSELARRVIKKTCRRLTHILLAGIPAICLCYSQISQA) is a signal peptide. The Peptidase S6 domain maps to 56-301 (GIVRSDIAYQ…NVIPTDYLNQ (246 aa)). Residues H127, D155, and S258 each act as charge relay system in the active site. One can recognise an Autotransporter domain in the interval 1106-1372 (DTNGDAGAWA…AVNANFRYMF (267 aa)).

In terms of processing, cleaved to release the mature protein from the outer membrane.

It is found in the periplasm. The protein resides in the secreted. Its subcellular location is the cell surface. It localises to the cell outer membrane. Functionally, involved in intestinal colonization, displays in vitro mucinolytic activity, serum resistance, and hemagglutination. Important to penetrate the intestinal mucus layer. This is Serine protease pic autotransporter (pic) from Escherichia coli O44:H18 (strain 042 / EAEC).